Reading from the N-terminus, the 88-residue chain is UPF0250 protein Sbal_3280 (88 aa).

The protein belongs to the UPF0250 family.

This Shewanella baltica (strain OS155 / ATCC BAA-1091) protein is UPF0250 protein Sbal_3280.